The chain runs to 110 residues: Chorion class B protein M2410 (110 aa).

4 repeat units span residues 1–4 (YGGL), 5–9 (GYGGL), 10–14 (GYGGL), and 15–19 (GYGGL). A 4 X 5 AA tandem repeats of G-Y-G-G-L region spans residues 1–19 (YGGLGYGGLGYGGLGYGGL). Residues 1 to 27 (YGGLGYGGLGYGGLGYGGLGGGCGRGF) form a left arm region. Residues 28–96 (SGGGLPVATA…GNGDVGITRE (69 aa)) form a central domain region. The right arm (Gly-rich tandem repeats) stretch occupies residues 97 to 110 (GGLGYGAGYGGGYG).

Belongs to the chorion protein family.

Its function is as follows. This protein is one of many from the eggshell of the silk moth. This chain is Chorion class B protein M2410, found in Bombyx mori (Silk moth).